The following is a 267-amino-acid chain: L-aspartate dehydrogenase (267 aa).

Residues Ala-124 and Asn-190 each contribute to the NAD(+) site. Residue His-218 is part of the active site.

Belongs to the L-aspartate dehydrogenase family.

It carries out the reaction L-aspartate + NADP(+) + H2O = oxaloacetate + NH4(+) + NADPH + H(+). The catalysed reaction is L-aspartate + NAD(+) + H2O = oxaloacetate + NH4(+) + NADH + H(+). It functions in the pathway cofactor biosynthesis; NAD(+) biosynthesis; iminoaspartate from L-aspartate (dehydrogenase route): step 1/1. Its function is as follows. Specifically catalyzes the NAD or NADP-dependent dehydrogenation of L-aspartate to iminoaspartate. This is L-aspartate dehydrogenase from Methanococcus maripaludis (strain C5 / ATCC BAA-1333).